Reading from the N-terminus, the 36-residue chain is APPEPVYPGDDATPEQMAEYVADLRRYINMLTRPRY.

Tyr36 bears the Tyrosine amide mark.

The protein belongs to the NPY family.

It is found in the secreted. Functionally, hormone secreted by pancreatic cells that acts as a regulator of pancreatic and gastrointestinal functions probably by signaling through the G protein-coupled receptor NPY4R2. This Oryctolagus cuniculus (Rabbit) protein is Pancreatic polypeptide (PPY).